The following is a 383-amino-acid chain: S-adenosylmethionine synthase 1 (383 aa).

His-15 lines the ATP pocket. Asp-17 is a Mg(2+) binding site. Glu-43 contacts K(+). Residues Glu-56 and Gln-99 each coordinate L-methionine. Residues Gln-99 to Arg-109 are flexible loop. Residues Asp-162–Lys-164, Arg-228–Phe-229, Asp-237, Arg-243–Lys-244, Ala-260, and Lys-264 contribute to the ATP site. Asp-237 is an L-methionine binding site. Lys-268 lines the L-methionine pocket.

It belongs to the AdoMet synthase family. In terms of assembly, homotetramer; dimer of dimers. Requires Mg(2+) as cofactor. It depends on K(+) as a cofactor.

It localises to the cytoplasm. It carries out the reaction L-methionine + ATP + H2O = S-adenosyl-L-methionine + phosphate + diphosphate. It participates in amino-acid biosynthesis; S-adenosyl-L-methionine biosynthesis; S-adenosyl-L-methionine from L-methionine: step 1/1. Catalyzes the formation of S-adenosylmethionine (AdoMet) from methionine and ATP. The overall synthetic reaction is composed of two sequential steps, AdoMet formation and the subsequent tripolyphosphate hydrolysis which occurs prior to release of AdoMet from the enzyme. The sequence is that of S-adenosylmethionine synthase 1 from Rhodopseudomonas palustris (strain BisB18).